The sequence spans 692 residues: Pentatricopeptide repeat-containing protein At2g04860 (692 aa).

17 PPR repeats span residues 12 to 46 (DLSY…SLTP), 47 to 83 (NHFT…GLDR), 84 to 114 (FVYV…MPER), 115 to 149 (DTVV…GFSP), 150 to 184 (SATT…GLEL), 185 to 215 (DSQV…MKDK), 216 to 250 (STVS…NVEI), 280 to 314 (DISV…SIVG), 316 to 345 (TSIV…CMKI), 346 to 380 (DAVA…GLCT), 381 to 411 (KTLV…LQET), 412 to 447 (PLIS…GLLP), 448 to 482 (DAIT…NFEN), 483 to 513 (ENFV…IKAP), 514 to 548 (CTAT…GLKP), 549 to 584 (DEIT…GISP), and 585 to 615 (TLQH…MDIK). The segment at 620-692 (VWGALLSACI…YDGYLGVSQI (73 aa)) is type E motif; degenerate.

Belongs to the PPR family. PCMP-E subfamily.

This Arabidopsis thaliana (Mouse-ear cress) protein is Pentatricopeptide repeat-containing protein At2g04860 (PCMP-E74).